Reading from the N-terminus, the 153-residue chain is Transcription antitermination protein NusB (153 aa).

It belongs to the NusB family.

Its function is as follows. Involved in transcription antitermination. Required for transcription of ribosomal RNA (rRNA) genes. Binds specifically to the boxA antiterminator sequence of the ribosomal RNA (rrn) operons. This chain is Transcription antitermination protein NusB, found in Clostridium tetani (strain Massachusetts / E88).